Here is a 524-residue protein sequence, read N- to C-terminus: MQTSMIAAIYKNFLGHAPDWYKKTIIAFLIVNPFIFMVDPYIAGWTLVIQFIFTLAMALKCYPLQPGGLLLIEAMFIGMTSPGHMMHEIEVNLEVLLLLVFMVAGIYFMKDLLMFLFTKLVIKVRNKLILSLSFIFASAFLSAFLDALTVVAVIISVGLGFYSIYHKVASGKEFHSDHDHTSDDELGSHDLEDFRAFLRNLMMHSAVGTALGGVMTMVGEPQNLIIADKAGWDFVEFFIRMAPVTLPVFVFGLLTTVVLEKTGTFSYGAKLPSAVRQILVDYNDHMDKGRSKRETAKLVVQALIGIWLIVGLATHMASVGLIGLSVIVLATSMSGVIEEHALGKAFEEALPFTALLCVFFGVVAVIIDQGLFQPVIHWVLSFEGETQMVMFYLANGVLSMVSDNVFVGSVYITEVTAALEAGQITRDQYDMLAVAINTGTNLPSVATPNGQAAFLFLLTSAIAPLLRLSYGRMVMMALPYTIVLTIVGLVATYIGLADATQVLYDMHLIEHHTAVEAGAQAVGH.

Transmembrane regions (helical) follow at residues 25 to 45 (IIAFLIVNPFIFMVDPYIAGW), 97 to 117 (LLLVFMVAGIYFMKDLLMFLF), 135 to 155 (IFASAFLSAFLDALTVVAVII), 234 to 254 (FVEFFIRMAPVTLPVFVFGLL), 302 to 322 (ALIGIWLIVGLATHMASVGLI), 352 to 372 (FTALLCVFFGVVAVIIDQGLF), 388 to 408 (MVMFYLANGVLSMVSDNVFVG), 445 to 465 (VATPNGQAAFLFLLTSAIAPL), and 474 to 494 (VMMALPYTIVLTIVGLVATYI).

Belongs to the NhaB Na(+)/H(+) (TC 2.A.34) antiporter family.

It is found in the cell inner membrane. It carries out the reaction 2 Na(+)(in) + 3 H(+)(out) = 2 Na(+)(out) + 3 H(+)(in). Functionally, na(+)/H(+) antiporter that extrudes sodium in exchange for external protons. The sequence is that of Na(+)/H(+) antiporter NhaB from Alteromonas mediterranea (strain DSM 17117 / CIP 110805 / LMG 28347 / Deep ecotype).